The chain runs to 153 residues: Fucose mutarotase (153 aa).

H24 (proton donor) is an active-site residue. D32 serves as a coordination point for substrate. D69 is an active-site residue. Positions 79, 119, 137, and 139 each coordinate substrate. Residue Y119 is part of the active site.

Belongs to the RbsD / FucU family. Mainly homodimer, but also exists as homotetramer, homooctamer, and homodecamer. The homodimeric form seems catalytically inactive.

The enzyme catalyses alpha-L-fucose = beta-L-fucose. It functions in the pathway carbohydrate metabolism; L-fucose metabolism. Its function is as follows. Involved in the interconversion between alpha- and beta-L-fucoses. L-Fucose (6-deoxy-L-galactose) exists as alpha-L-fucose (29.5%) and beta-L-fucose (70.5%), the beta-form is metabolized through the salvage pathway. GDP-L-fucose formed either by the de novo or salvage pathways is transported into the endoplasmic reticulum, where it serves as a substrate for N- and O-glycosylations by fucosyltransferases. Fucosylated structures expressed on cell surfaces or secreted in biological fluids are believed to play a critical role in cell-cell adhesion and recognition processes. The protein is Fucose mutarotase (FUOM) of Bos taurus (Bovine).